The sequence spans 261 residues: Transmembrane and immunoglobulin domain-containing protein 1 (261 aa).

Residues 1–26 (MVWKITGPLQACQLLLVVLSLPQGRT) form the signal peptide. One can recognise an Ig-like C2-type 1 domain in the interval 27 to 113 (SSVLTVNGRT…LQRDQTVSVT (87 aa)). Over 27-215 (SSVLTVNGRT…DFHLLVKDKV (189 aa)) the chain is Extracellular. C53 and C102 are disulfide-bonded. N-linked (GlcNAc...) asparagine glycans are attached at residues N57, N82, N92, N117, N157, and N189. The region spanning 121-206 (PPLLSGNGFQ…SSSLKMETMD (86 aa)) is the Ig-like C2-type 2 domain. A disulfide bond links C142 and C194. Residues 216-236 (FVMPAEPIIAACVVVVLTMAF) traverse the membrane as a helical segment. The Cytoplasmic portion of the chain corresponds to 237-261 (ALFSRRKRIMKLCGKKNDPNSETAL).

In terms of assembly, homodimer. N-glycosylated.

It localises to the cell membrane. Its subcellular location is the cytoplasm. Functionally, may control cell-cell adhesion, cell migration and proliferation, cell morphology, and protects renal epithelial cells from oxidative cell injury to promote cell survival. The sequence is that of Transmembrane and immunoglobulin domain-containing protein 1 from Mus musculus (Mouse).